Reading from the N-terminus, the 365-residue chain is Succinyl-diaminopimelate desuccinylase (365 aa).

H65 contributes to the Zn(2+) binding site. D67 is a catalytic residue. D96 lines the Zn(2+) pocket. E126 functions as the Proton acceptor in the catalytic mechanism. 3 residues coordinate Zn(2+): E127, E155, and H340.

Belongs to the peptidase M20A family. DapE subfamily. Homodimer. Zn(2+) is required as a cofactor. Co(2+) serves as cofactor.

It catalyses the reaction N-succinyl-(2S,6S)-2,6-diaminopimelate + H2O = (2S,6S)-2,6-diaminopimelate + succinate. The protein operates within amino-acid biosynthesis; L-lysine biosynthesis via DAP pathway; LL-2,6-diaminopimelate from (S)-tetrahydrodipicolinate (succinylase route): step 3/3. Its function is as follows. Catalyzes the hydrolysis of N-succinyl-L,L-diaminopimelic acid (SDAP), forming succinate and LL-2,6-diaminopimelate (DAP), an intermediate involved in the bacterial biosynthesis of lysine and meso-diaminopimelic acid, an essential component of bacterial cell walls. This chain is Succinyl-diaminopimelate desuccinylase, found in Campylobacter jejuni subsp. jejuni serotype O:23/36 (strain 81-176).